Here is a 195-residue protein sequence, read N- to C-terminus: Myelin-associated neurite-outgrowth inhibitor (195 aa).

At Met1 the chain carries N-acetylmethionine. Topologically, residues 1 to 18 (MNPVYSPGSSGVPYANAK) are cytoplasmic. Ser6 carries the post-translational modification Phosphoserine. A helical transmembrane segment spans residues 19–42 (GIGYPAGFPMGYAAAAPAYSPNMY). The Extracellular segment spans residues 43–142 (PGANPTFQTG…PAPIPPPRGN (100 aa)). An N-linked (GlcNAc...) asparagine glycan is attached at Asn46. Residues 143–164 (GVTMGMVAGTTMAMSAGTLLTA) form a helical membrane-spanning segment. The Cytoplasmic segment spans residues 165–195 (HSPTPVAPHPVTVPTYRAPGTPTYSYVPPQW).

It belongs to the FAM168 family. As to quaternary structure, may form homodimers. May interact with DAZAP2, FAM168A, PRDX6, RBM6, TMTC1 and YPEL2. Interacts with CDC27. N-glycosylated. Expressed in the brain, within neuronal axonal fibers and associated with myelin sheets (at protein level). Expression tends to be lower in the brain of Alzheimer disease patients compared to healthy individuals (at protein level).

Its subcellular location is the cytoplasm. The protein localises to the perinuclear region. The protein resides in the cell membrane. It localises to the cell projection. It is found in the axon. In terms of biological role, inhibitor of neuronal axonal outgrowth. Acts as a negative regulator of CDC42 and STAT3 and a positive regulator of STMN2. Positive regulator of CDC27. This is Myelin-associated neurite-outgrowth inhibitor (FAM168B) from Homo sapiens (Human).